Consider the following 402-residue polypeptide: Type II NADH:quinone oxidoreductase (402 aa).

FAD is bound by residues 12–16 (GAGYA), 39–40 (NK), and valine 83. Residue glutamate 172 is part of the active site. FAD is bound by residues aspartate 302, 319 to 320 (AQ), and lysine 379.

The protein belongs to the NADH dehydrogenase family. Requires FAD as cofactor.

It localises to the cell membrane. It catalyses the reaction a quinone + NADH + H(+) = a quinol + NAD(+). Alternative, nonproton pumping NADH:quinone oxidoreductase that delivers electrons to the respiratory chain by oxidation of NADH and reduction of quinones, and contributes to the regeneration of NAD(+). In Staphylococcus aureus (strain bovine RF122 / ET3-1), this protein is Type II NADH:quinone oxidoreductase.